Here is a 146-residue protein sequence, read N- to C-terminus: PTS system fructose-specific EIIA component (146 aa).

A PTS EIIA type-4 domain is found at 1-124 (MISVIISGHG…NLKAMSQQSF (124 aa)). The active-site Tele-phosphohistidine intermediate is H9. H9 carries the phosphohistidine; by HPr modification.

It is found in the cytoplasm. In terms of biological role, the phosphoenolpyruvate-dependent sugar phosphotransferase system (sugar PTS), a major carbohydrate active transport system, catalyzes the phosphorylation of incoming sugar substrates concomitantly with their translocation across the cell membrane. The enzyme II LevDE PTS system is involved in fructose transport. Functionally, levD and LevE act as negative regulators of the levanase operon. They may be involved in a PTS-mediated phosphorylation of a regulator. This is PTS system fructose-specific EIIA component from Bacillus subtilis (strain 168).